A 932-amino-acid polypeptide reads, in one-letter code: GPI ethanolamine phosphate transferase 1 (932 aa).

At 1 to 8 (MISLNKKL) the chain is on the cytoplasmic side. Residues 9–29 (VLLVGVIFHVAFMWSIFDIYF) traverse the membrane as a helical segment. Residues 30-456 (VSPLIHGMKH…TYNWLFLRTL (427 aa)) lie on the Lumenal side of the membrane. 3 N-linked (GlcNAc...) asparagine glycosylation sites follow: N138, N202, and N360. The chain crosses the membrane as a helical span at residues 457-477 (VTIGFFGWIAVAFCSYLLAFV). Residues 478–486 (VQSDKPFTT) lie on the Cytoplasmic side of the membrane. A helical membrane pass occupies residues 487 to 507 (SLPLKGVAYVALAILSGFFVF). The Lumenal segment spans residues 508-509 (QK). A helical membrane pass occupies residues 510-530 (SPLHYHLYAVFPVVFWEAVLQ). At 531–551 (RRTAVAEGISILARRSTSKAP) the chain is on the cytoplasmic side. The chain crosses the membrane as a helical span at residues 552–572 (ALAAILDIGLSLVLLEAIVYG). Topologically, residues 573–577 (YFHRE) are lumenal. Residues 578-598 (IFSVCFGLATLWPFVHNFTVA) traverse the membrane as a helical segment. Over 599 to 603 (KREWP) the chain is Cytoplasmic. Residues 604–624 (TTLAWVVMCAIMSSFTLLEVV) form a helical membrane-spanning segment. Residues 625–627 (KVE) are Lumenal-facing. The chain crosses the membrane as a helical span at residues 628–648 (SIEQILLSGALMLVIGLVFTI). Over 649–653 (HLQRK) the chain is Cytoplasmic. The chain crosses the membrane as a helical span at residues 654 to 674 (LALAASTVCVLFAQILLVVAT). Residues 675–696 (MYFTRESVESLTARNGLPLFSQ) are Lumenal-facing. A helical transmembrane segment spans residues 697-717 (VGGWISLLLSLAVPFLHFLGS). Residues 718–737 (DAKDYRLRLLIIFLAFGPTF) are Cytoplasmic-facing. A helical transmembrane segment spans residues 738–758 (VILTISWEGFFYVCFFAILVI). Residues 759-786 (WIELETQMRDARVTPQTRADLTPGDFRM) lie on the Lumenal side of the membrane. A helical membrane pass occupies residues 787–807 (ALFTFFMSQIGFFGIGNIASI). The Cytoplasmic segment spans residues 808 to 828 (SSFSLDSVYRLIPVFDPFSMG). A helical membrane pass occupies residues 829–849 (ALLMFKILVPFAVLSACLGIL). Topologically, residues 850–859 (NLKLGVPPSA) are lumenal. The chain crosses the membrane as a helical span at residues 860–880 (LFSMVLCVSDILTLNFFYLVV). Residues 881–900 (DEGSWLDIGTGISHYCIASG) lie on the Cytoplasmic side of the membrane. Residues 901–921 (LSLFMMVLEYLSGVLVAGVTI) traverse the membrane as a helical segment. Residues 922–932 (APHVSKIKKDM) are Lumenal-facing.

This sequence belongs to the PIGG/PIGN/PIGO family. PIGN subfamily.

The protein localises to the endoplasmic reticulum membrane. Its pathway is glycolipid biosynthesis; glycosylphosphatidylinositol-anchor biosynthesis. Ethanolamine phosphate transferase involved in glycosylphosphatidylinositol-anchor biosynthesis. Transfers ethanolamine phosphate to the first alpha-1,4-linked mannose of the glycosylphosphatidylinositol precursor of GPI-anchor. This Yarrowia lipolytica (strain CLIB 122 / E 150) (Yeast) protein is GPI ethanolamine phosphate transferase 1 (MCD4).